The primary structure comprises 150 residues: Catabolic 3-dehydroquinase 2 (150 aa).

Tyr-23 acts as the Proton acceptor in catalysis. Substrate contacts are provided by Asn-74, His-80, and Asp-87. Residue His-100 is the Proton donor of the active site. Substrate is bound by residues 101-102 and Arg-111; that span reads IT.

The protein belongs to the type-II 3-dehydroquinase family. Homododecamer. Adopts a ring-like structure, composed of an arrangement of two hexameric rings stacked on top of one another.

It catalyses the reaction 3-dehydroquinate = 3-dehydroshikimate + H2O. It functions in the pathway aromatic compound metabolism; 3,4-dihydroxybenzoate biosynthesis; 3,4-dihydroxybenzoate from 3-dehydroquinate: step 1/2. Its function is as follows. Is involved in the catabolism of quinate. Allows the utilization of quinate as carbon source via the beta-ketoadipate pathway. This chain is Catabolic 3-dehydroquinase 2, found in Neosartorya fischeri (strain ATCC 1020 / DSM 3700 / CBS 544.65 / FGSC A1164 / JCM 1740 / NRRL 181 / WB 181) (Aspergillus fischerianus).